We begin with the raw amino-acid sequence, 143 residues long: UPF0225 protein Reut_A0143 (143 aa).

It belongs to the UPF0225 family.

The protein is UPF0225 protein Reut_A0143 of Cupriavidus pinatubonensis (strain JMP 134 / LMG 1197) (Cupriavidus necator (strain JMP 134)).